The following is a 313-amino-acid chain: MARWRPDMAEREATPEALYLRRRDFLALGAAGAVGLLLPRGARAGDPTGAALQVARKVDQAGGETPTPWDSVTGYNNFYELGTSKEDPSRNAGSLRARPWTVTIAGEVKRPQTLDVDALVRMFPPEERVYRMRCVEAWSMVIPWVGFPLADLVRRLEPTSRAKYVAFQTLLDRDQLPGQRRPVLPWPYVEALRIDEANHPLALLAVGLYGRVLPGQNGAPLRLVVPWKYGFKGAKSIVRITFLADRPHTTWNDAAPDEYGFYANVNPEVDHPRWSQARERRIGEFFRRKTLPFNGYAAEVAPLYAGLDLRKNY.

A signal peptide (tat-type signal) is located at residues 1–44; sequence MARWRPDMAEREATPEALYLRRRDFLALGAAGAVGLLLPRGARA. Mo-molybdopterin-binding positions include N76, 79-80, C134, T169, N217, R222, and 233-235; these read YE and GAK.

It belongs to the MsrP family. As to quaternary structure, heterodimer of a catalytic subunit (MsrP) and a heme-binding subunit (MsrQ). The cofactor is Mo-molybdopterin. Predicted to be exported by the Tat system. The position of the signal peptide cleavage has not been experimentally proven.

It is found in the periplasm. It carries out the reaction L-methionyl-[protein] + a quinone + H2O = L-methionyl-(S)-S-oxide-[protein] + a quinol. The enzyme catalyses L-methionyl-[protein] + a quinone + H2O = L-methionyl-(R)-S-oxide-[protein] + a quinol. Part of the MsrPQ system that repairs oxidized periplasmic proteins containing methionine sulfoxide residues (Met-O), using respiratory chain electrons. Thus protects these proteins from oxidative-stress damage caused by reactive species of oxygen and chlorine generated by the host defense mechanisms. MsrPQ is essential for the maintenance of envelope integrity under bleach stress, rescuing a wide series of structurally unrelated periplasmic proteins from methionine oxidation. The catalytic subunit MsrP is non-stereospecific, being able to reduce both (R-) and (S-) diastereoisomers of methionine sulfoxide. In Anaeromyxobacter dehalogenans (strain 2CP-1 / ATCC BAA-258), this protein is Protein-methionine-sulfoxide reductase catalytic subunit MsrP.